A 74-amino-acid chain; its full sequence is U3-agatoxin-Ao1b (74 aa).

Positions 1–20 (MKAAISLIIFFAILFVVIEA) are cleaved as a signal peptide. A propeptide spanning residues 21–34 (ISYEEGKELFQKER) is cleaved from the precursor. 4 cysteine pairs are disulfide-bonded: C37–C53, C44–C58, C52–C68, and C60–C66. S72 carries the serine amide modification.

It belongs to the neurotoxin 07 (Beta/delta-agtx) family. 02 (aga-3) subfamily. Expressed by the venom gland.

It localises to the secreted. In terms of biological role, insecticidal neurotoxin that induces an irreversible spastic paralysis when injected into insects. Modifies presynaptic voltage-gated sodium channels (Nav), causing them to open at the normal resting potential of the nerve. This leads to spontaneous release of neurotransmitter and repetitive action potentials in motor neurons. In Agelena orientalis (Funnel-web spider), this protein is U3-agatoxin-Ao1b.